Consider the following 453-residue polypeptide: O-glucose prenyltransferase PaPT (453 aa).

An L-tryptophan-binding site is contributed by 95–96 (AP). 7 residues coordinate substrate: lysine 210, tyrosine 212, arginine 279, lysine 281, tyrosine 283, tyrosine 368, and tyrosine 435.

It belongs to the tryptophan dimethylallyltransferase family.

The protein operates within mycotoxin biosynthesis. O-glucose prenyltransferase; part of the 2 gene clusters that mediate the biosynthesis of fusicoccins, diterpene glucosides that display phytohormone-like activity and function as potent activators of plasma membrane H(+)-ATPases in plants by modifying 14-3-3 proteins and cause the plant disease constriction canker. The first step in the pathway is performed by the fusicoccadiene synthase PaFS that possesses both prenyl transferase and terpene cyclase activity, converting isopentenyl diphosphate and dimethylallyl diphosphate into geranylgeranyl diphosphate (GGDP) and successively converting GGDP into fusicocca-2,10(14)-diene, a precursor for fusicoccin H. The second step is the oxidation at the C-8 position by the cytochrome P450 monooxygenase PaP450-2 to yield fusicocca-2,10(14)-diene-8-beta-ol. The cytochrome P450 monooxygenase PaP450-1 then catalyzes the hydroxylation at the C-16 position to produce fusicocca-2,10(14)-diene-8-beta,16-diol. The dioxygenase fc-dox then catalyzes the 16-oxydation of fusicocca-2,10(14)-diene-8-beta,16-diol to yield an aldehyde (8-beta-hydroxyfusicocca-1,10(14)-dien-16-al). The short-chain dehydrogenase/reductase fc-sdr catalyzes the reduction of the aldehyde to yield fusicocca-1,10(14)-diene-8-beta,16-diol. The next step is the hydroxylation at C-9 performed by the cytochrome P450 monooxygenase PaP450-3 that leads to fusicoccin H aglycon which is glycosylated to fusicoccin H by the O-glycosyltransferase PaGT. Hydroxylation at C-12 by the cytochrome P450 monooxygenase PaP450-4 leads then to the production of fusicoccin Q and is followed by methylation by the O-methyltransferase PaMT to yield fusicoccin P. Fusicoccin P is further converted to fusicoccin J via prenylation by the O-glucose prenyltransferase PaPT. Cytochrome P450 monooxygenase PaP450-5 then performs hydroxylation at C-19 to yield dideacetyl-fusicoccin A which is acetylated to 3'-O-deacetyl-fusicoccin A by the O-acetyltransferase PaAT-2. Finally, a another acetylation by the O-acetyltransferase PaAT-1 yields fusicoccin A. The polypeptide is O-glucose prenyltransferase PaPT (Phomopsis amygdali (Fusicoccum amygdali)).